The sequence spans 528 residues: Probable methylmalonate-semialdehyde/malonate-semialdehyde dehydrogenase [acylating], mitochondrial (528 aa).

Residues 1-26 (MLSFKFAKSASKVIGNRNFHSSSASL) constitute a mitochondrion transit peptide. Residues phenylalanine 175, lysine 199, glutamate 202, and arginine 203 each coordinate NAD(+). Catalysis depends on cysteine 307, which acts as the Nucleophile. Glutamate 408 is a binding site for NAD(+).

Belongs to the aldehyde dehydrogenase family. Homotetramer.

The protein resides in the mitochondrion. It carries out the reaction 2-methyl-3-oxopropanoate + NAD(+) + CoA + H2O = propanoyl-CoA + hydrogencarbonate + NADH + H(+). It catalyses the reaction 3-oxopropanoate + NAD(+) + CoA + H2O = hydrogencarbonate + acetyl-CoA + NADH + H(+). Functionally, probable malonate and methylmalonate semialdehyde dehydrogenase involved in the catabolism of valine, thymine, and compounds catabolized by way of beta-alanine, including uracil and cytidine. In Dictyostelium discoideum (Social amoeba), this protein is Probable methylmalonate-semialdehyde/malonate-semialdehyde dehydrogenase [acylating], mitochondrial (mmsdh).